Consider the following 194-residue polypeptide: Outer surface 22 kDa lipoprotein (194 aa).

The signal sequence occupies residues 1 to 21; that stretch reads MYKNGFFKNYLSLLLIFLVIA. The N-palmitoyl cysteine moiety is linked to residue Cys-22. Residue Cys-22 is the site of S-diacylglycerol cysteine attachment.

It is found in the cell outer membrane. This is Outer surface 22 kDa lipoprotein (p22) from Borreliella burgdorferi (strain N40) (Borrelia burgdorferi).